A 556-amino-acid polypeptide reads, in one-letter code: Formate--tetrahydrofolate ligase (556 aa).

An ATP-binding site is contributed by 65-72 (TPAGEGKS).

It belongs to the formate--tetrahydrofolate ligase family.

It carries out the reaction (6S)-5,6,7,8-tetrahydrofolate + formate + ATP = (6R)-10-formyltetrahydrofolate + ADP + phosphate. It participates in one-carbon metabolism; tetrahydrofolate interconversion. This chain is Formate--tetrahydrofolate ligase, found in Clostridium perfringens (strain SM101 / Type A).